The chain runs to 591 residues: Frizzled and smoothened-like protein F (591 aa).

An N-terminal signal peptide occupies residues 1 to 17; that stretch reads MKILIIFIIFIISYISG. The Extracellular segment spans residues 18-244; the sequence is FEIPKGFGIG…KWDQLLTMSK (227 aa). An FZ domain is found at 30 to 177; it reads IPDAECLNYI…GTFAVPCSDP (148 aa). 3 disulfides stabilise this stretch: C35–C105, C48–C98, and C123–C174. 4 N-linked (GlcNAc...) asparagine glycosylation sites follow: N167, N187, N202, and N230. A helical transmembrane segment spans residues 245 to 265; sequence ILSTISFILSLYNVLTFGIIN. The Cytoplasmic portion of the chain corresponds to 266 to 275; the sequence is KKVSDPHKCT. A helical membrane pass occupies residues 276 to 296; the sequence is CFFSGSIALVNLCDIITYGIG. Residues 297 to 321 are Extracellular-facing; it reads YEELLCPEPGRSAKQQLDPVCGLTG. A helical membrane pass occupies residues 322–342; that stretch reads AFFHLGITYCVLWSMTMGLVL. Topologically, residues 343-353 are cytoplasmic; that stretch reads YCSVKRQKWFK. The chain crosses the membrane as a helical span at residues 354–374; that stretch reads FNYFLIGNTTFTITTVVIAAA. Residues 375-397 lie on the Extracellular side of the membrane; the sequence is TSKFEAGLGSIECWIRDRWYAIS. A helical membrane pass occupies residues 398–418; the sequence is LFWIPCGIALLIGSFCIIAVI. At 419–442 the chain is on the cytoplasmic side; it reads HEVYKTSKKSISNRNDLLQRELKP. Residues 443–463 form a helical membrane-spanning segment; the sequence is LLIVIFISGSFLYLFIFFFDI. The Extracellular segment spans residues 464 to 495; sequence ERKFGGYRSAVEDYVLCLLNGSQEECFTTGPS. A glycan (N-linked (GlcNAc...) asparagine) is linked at N483. Residues 496-516 traverse the membrane as a helical segment; sequence YVPYFLFYLVIRWFGIIFFLF. Over 517-591 the chain is Cytoplasmic; sequence YGTSNIARKI…AVELESIKIN (75 aa). The segment covering 538-571 has biased composition (low complexity); the sequence is SSISPKSTPKSSPKNSDSKINSNSTNNNNMILND. The tract at residues 538-573 is disordered; sequence SSISPKSTPKSSPKNSDSKINSNSTNNNNMILNDNN.

The protein belongs to the G-protein coupled receptor Fz/Smo family.

It is found in the membrane. In Dictyostelium discoideum (Social amoeba), this protein is Frizzled and smoothened-like protein F (fslF).